A 348-amino-acid chain; its full sequence is Signal recognition particle receptor FtsY (348 aa).

GTP-binding positions include 143–150, 225–229, and 289–292; these read GVNGVGKT, DTSGR, and TKMD.

It belongs to the GTP-binding SRP family. FtsY subfamily. Part of the signal recognition particle protein translocation system, which is composed of SRP and FtsY.

The protein localises to the cell membrane. The protein resides in the cytoplasm. It catalyses the reaction GTP + H2O = GDP + phosphate + H(+). Functionally, involved in targeting and insertion of nascent membrane proteins into the cytoplasmic membrane. Acts as a receptor for the complex formed by the signal recognition particle (SRP) and the ribosome-nascent chain (RNC). The chain is Signal recognition particle receptor FtsY from Mycoplasma pneumoniae (strain ATCC 29342 / M129 / Subtype 1) (Mycoplasmoides pneumoniae).